A 162-amino-acid chain; its full sequence is RNA pyrophosphohydrolase (162 aa).

The region spanning Glu-7 to Glu-149 is the Nudix hydrolase domain. The Nudix box signature appears at Gly-40–Gly-61.

It belongs to the Nudix hydrolase family. RppH subfamily. Requires a divalent metal cation as cofactor.

Its function is as follows. Accelerates the degradation of transcripts by removing pyrophosphate from the 5'-end of triphosphorylated RNA, leading to a more labile monophosphorylated state that can stimulate subsequent ribonuclease cleavage. The protein is RNA pyrophosphohydrolase of Wolbachia pipientis subsp. Culex pipiens (strain wPip).